A 244-amino-acid chain; its full sequence is Small ribosomal subunit protein uS2 (244 aa).

It belongs to the universal ribosomal protein uS2 family.

The sequence is that of Small ribosomal subunit protein uS2 from Buchnera aphidicola subsp. Acyrthosiphon pisum (strain 5A).